We begin with the raw amino-acid sequence, 138 residues long: Enhancer of split malpha protein (138 aa).

It belongs to the M4-like protein family.

Part of the Notch signaling pathway. The sequence is that of Enhancer of split malpha protein from Drosophila melanogaster (Fruit fly).